The following is an 86-amino-acid chain: Co-chaperonin GroES (86 aa).

It belongs to the GroES chaperonin family. As to quaternary structure, heptamer of 7 subunits arranged in a ring. Interacts with the chaperonin GroEL.

It localises to the cytoplasm. Functionally, together with the chaperonin GroEL, plays an essential role in assisting protein folding. The GroEL-GroES system forms a nano-cage that allows encapsulation of the non-native substrate proteins and provides a physical environment optimized to promote and accelerate protein folding. GroES binds to the apical surface of the GroEL ring, thereby capping the opening of the GroEL channel. The sequence is that of Co-chaperonin GroES from Sulfurovum sp. (strain NBC37-1).